A 167-amino-acid chain; its full sequence is Putative peroxiredoxin-A (167 aa).

Residues 4 to 167 (IKRGDRFPTT…STAQKIIAKL (164 aa)) enclose the Thioredoxin domain. Residue Cys-53 is the Cysteine sulfenic acid (-SOH) intermediate of the active site. The Microbody targeting signal signature appears at 165–167 (AKL).

The protein belongs to the peroxiredoxin family. Prx5 subfamily.

It is found in the peroxisome membrane. It catalyses the reaction a hydroperoxide + [thioredoxin]-dithiol = an alcohol + [thioredoxin]-disulfide + H2O. Functionally, thiol-specific peroxidase that catalyzes the reduction of hydrogen peroxide and organic hydroperoxides to water and alcohols, respectively. Plays a role in cell protection against oxidative stress by detoxifying peroxides and as sensor of hydrogen peroxide-mediated signaling events. The sequence is that of Putative peroxiredoxin-A (PMPA) from Candida boidinii (Yeast).